The primary structure comprises 403 residues: Phosphoglycerate kinase (403 aa).

Substrate-binding positions include 24-26 (DLN), arginine 39, 62-65 (HLGR), arginine 121, and arginine 161. Residues lysine 211, glycine 299, glutamate 330, and 359 to 362 (GGDS) each bind ATP.

It belongs to the phosphoglycerate kinase family. As to quaternary structure, monomer.

It localises to the cytoplasm. The enzyme catalyses (2R)-3-phosphoglycerate + ATP = (2R)-3-phospho-glyceroyl phosphate + ADP. The protein operates within carbohydrate degradation; glycolysis; pyruvate from D-glyceraldehyde 3-phosphate: step 2/5. The sequence is that of Phosphoglycerate kinase from Rhodococcus erythropolis (strain PR4 / NBRC 100887).